An 859-amino-acid chain; its full sequence is Mycobactin import ATP-binding/permease protein IrtA (859 aa).

Residues M1–P292 are Cytoplasmic-facing. Residues A15–D122 enclose the FAD-binding FR-type domain. Residues R70–T73, D87–H91, and A97–S98 each bind FAD. The disordered stretch occupies residues H247–S267. A helical membrane pass occupies residues L293 to L313. Residues L293–T575 enclose the ABC transmembrane type-1 domain. Residues L314 to G334 lie on the Periplasmic side of the membrane. A helical membrane pass occupies residues F335–L355. The Cytoplasmic segment spans residues H356 to A408. Residues V409 to V429 form a helical membrane-spanning segment. The Periplasmic portion of the chain corresponds to D430–R432. Residues V433–I453 form a helical membrane-spanning segment. Residues Q454–D519 lie on the Cytoplasmic side of the membrane. A helical membrane pass occupies residues L520 to A540. At T541 to N548 the chain is on the periplasmic side. Residues L549 to G569 form a helical membrane-spanning segment. The Cytoplasmic portion of the chain corresponds to L570–R859. One can recognise an ABC transporter domain in the interval V610–T843. G643–S650 is a binding site for ATP.

The protein belongs to the ABC transporter superfamily. Siderophore-Fe(3+) uptake transporter (SIUT) (TC 3.A.1.21) family. Forms a heterodimer with IrtB. FAD is required as a cofactor.

It localises to the cell inner membrane. Part of the ABC transporter complex IrtAB involved in the import of iron-bound mycobactin (Fe-MBT) and carboxymycobactin (Fe-cMBT). Mycobactins are then reduced by the siderophore interaction domain to facilitate iron release in the bacterial cell. Transmembrane domains (TMD) form a pore in the membrane and the ATP-binding domain (NBD) is responsible for energy generation. Required for replication in human macrophages and in mouse lungs. The sequence is that of Mycobactin import ATP-binding/permease protein IrtA (irtA) from Mycobacterium tuberculosis (strain ATCC 25618 / H37Rv).